Consider the following 904-residue polypeptide: Protein argonaute 4A (904 aa).

Disordered stretches follow at residues Met1–Ser33 and Lys143–Pro166. Pro residues predominate over residues Leu11 to Ala21. Residues Ser144–Pro156 show a composition bias toward low complexity. The 115-residue stretch at Pro274 to Pro388 folds into the PAZ domain. Residues Phe557–Lys865 form the Piwi domain. The interval Glu871–Leu890 is disordered. Residues Thr872–Ala885 are compositionally biased toward low complexity.

It belongs to the argonaute family. Ago subfamily.

Functionally, probably involved in the RNA silencing pathway. May bind to short RNAs such as microRNAs (miRNAs) or short interfering RNAs (siRNAs), and represses the translation of mRNAs which are complementary to them. The chain is Protein argonaute 4A (AGO4A) from Oryza sativa subsp. japonica (Rice).